The chain runs to 86 residues: Putative membrane protein insertion efficiency factor (86 aa).

The protein belongs to the UPF0161 family.

The protein resides in the cell inner membrane. In terms of biological role, could be involved in insertion of integral membrane proteins into the membrane. This is Putative membrane protein insertion efficiency factor from Pseudomonas aeruginosa (strain UCBPP-PA14).